The sequence spans 245 residues: Triosephosphate isomerase (245 aa).

Residue 9-11 coordinates substrate; it reads NWK. Catalysis depends on His92, which acts as the Electrophile. Residue Glu164 is the Proton acceptor of the active site. Substrate-binding positions include Gly170, Ser209, and 230 to 231; that span reads GG.

It belongs to the triosephosphate isomerase family. Homodimer.

It is found in the cytoplasm. The enzyme catalyses D-glyceraldehyde 3-phosphate = dihydroxyacetone phosphate. It participates in carbohydrate biosynthesis; gluconeogenesis. Its pathway is carbohydrate degradation; glycolysis; D-glyceraldehyde 3-phosphate from glycerone phosphate: step 1/1. In terms of biological role, involved in the gluconeogenesis. Catalyzes stereospecifically the conversion of dihydroxyacetone phosphate (DHAP) to D-glyceraldehyde-3-phosphate (G3P). This chain is Triosephosphate isomerase, found in Cupriavidus necator (strain ATCC 17699 / DSM 428 / KCTC 22496 / NCIMB 10442 / H16 / Stanier 337) (Ralstonia eutropha).